We begin with the raw amino-acid sequence, 648 residues long: Transcription termination factor FttA (648 aa).

Residues 9–76 are KHa; the sequence is DDILKEIREI…ISVRPDPDIL (68 aa). The tract at residues 77–144 is KHb; that stretch reads LPPEKAEELI…WAPRVVRTPP (68 aa). The interval 185 to 395 is metallo-beta-lactamase N-terminus; it reads WIRITGLGGF…LVMESTYGGS (211 aa). 6 residues coordinate Zn(2+): histidine 253, histidine 255, aspartate 257, histidine 258, histidine 341, and aspartate 364. Residues 396–589 are beta-Casp; the sequence is NDYQMPREEA…MEVHTIDGFS (194 aa). Residues 590-648 form a metallo-beta-lactamase C-terminus region; sequence GHADRRELMSYVARVRPRPERIITVHGEAHKCLDLSSSIHKKFGISTRAPNNLDAIRLK. Histidine 615 provides a ligand contact to Zn(2+).

The protein belongs to the metallo-beta-lactamase superfamily. RNA-metabolizing metallo-beta-lactamase-like family. FttA subfamily. Homodimer. Probably interacts transiently with RNA polymerase (RNAP), (via at least the RNAP stalk subunits Rpo4 and Rpo7), interacts transiently with the Spt4-Spt5 complex. It depends on Zn(2+) as a cofactor.

With respect to regulation, transcription termination is stimulated by the Spt4-Spt5 complex. Dipicolinic acid inhibits FttA-mediated termination in vitro and inhibits growth in vivo. Terminates transcription on the whole genome. Termination is linked to FttA-mediated RNA cleavage and does not require NTP hydrolysis. Cleaves endonucleolytically at the RNA exit channel of RNA polymerase (RNAP); the 5'-3' exonuclease activity of this protein degrades the nascent RNA released from RNAP. Functionally, facilitates transcription termination; addition of this factor to stalled transcription elongation complexes (TEC) promotes nascent transcript cleavage and releases RNA polymerase (RNAP) from DNA in vitro. Transcription termination competes with productive transcription elongation. Termination is stimulated by C-rich transcripts and inhibited by G-rich transcripts; the Spt4-Spt5 complex enhances termination on C-less transcripts. Yields an approximately 100 nucleotide RNA, consistent with endonucleolytic cleavage at the RNA exit channel of RNAP. In Thermococcus kodakarensis (strain ATCC BAA-918 / JCM 12380 / KOD1) (Pyrococcus kodakaraensis (strain KOD1)), this protein is Transcription termination factor FttA.